The chain runs to 459 residues: Interleukin-7 receptor subunit alpha (459 aa).

The signal sequence occupies residues 1-20; it reads MTILGTTFGVFFSLLQVVSG. Topologically, residues 21 to 241 are extracellular; that stretch reads ESGYAQNGDL…NNHSGETNPT (221 aa). Residues Cys42 and Cys57 are joined by a disulfide bond. N-linked (GlcNAc...) asparagine glycosylation is found at Asn49 and Asn65. Intrachain disulfides connect Cys74–Cys82 and Cys108–Cys118. The Fibronectin type-III domain maps to 131–231; it reads APFDLSVIYR…PSYYFRTPEI (101 aa). A glycan (N-linked (GlcNAc...) asparagine) is linked at Asn182. The WSXWS motif motif lies at 217–221; sequence WSEWS. A helical membrane pass occupies residues 242-262; it reads LLTISILSVLSVVLLVILACV. Over 263–459 the chain is Cytoplasmic; sequence LWKKRIKPII…VTMSSFCQKR (197 aa). Residues 272–280 carry the Box 1 motif motif; that stretch reads IWPSLPDHK. Residue Thr282 is modified to Phosphothreonine; by PKC. Residues 327-357 form a disordered region; it reads TVPPQLEESETQRPGGDVQSPSWPSENVVTT. Residues 345–357 show a composition bias toward polar residues; sequence QSPSWPSENVVTT.

This sequence belongs to the type I cytokine receptor family. Type 4 subfamily. The IL7 receptor is a heterodimer of IL7R and IL2RG. The TSLP receptor is a heterodimer of CRLF2 and IL7R. Interacts with CD53. N-glycosylated IL-7Ralpha binds IL7 300-fold more tightly than the unglycosylated form. In terms of processing, ubiquitinated by MARCHF8; leading to lysosomal degradation.

Its subcellular location is the cell membrane. In terms of biological role, receptor for interleukin-7. Also acts as a receptor for thymic stromal lymphopoietin (TSLP). The polypeptide is Interleukin-7 receptor subunit alpha (IL7R) (Callithrix jacchus (White-tufted-ear marmoset)).